The sequence spans 276 residues: NH(3)-dependent NAD(+) synthetase (276 aa).

ATP is bound at residue 46-53 (GISGGQDS). Mg(2+) is bound at residue D52. R140 contacts deamido-NAD(+). Residue T160 coordinates ATP. E165 is a Mg(2+) binding site. The deamido-NAD(+) site is built by K173 and D180. Residues K189 and T211 each contribute to the ATP site. 260–261 (HK) lines the deamido-NAD(+) pocket.

This sequence belongs to the NAD synthetase family. In terms of assembly, homodimer.

The catalysed reaction is deamido-NAD(+) + NH4(+) + ATP = AMP + diphosphate + NAD(+) + H(+). Its pathway is cofactor biosynthesis; NAD(+) biosynthesis; NAD(+) from deamido-NAD(+) (ammonia route): step 1/1. In terms of biological role, catalyzes the ATP-dependent amidation of deamido-NAD to form NAD. Uses ammonia as a nitrogen source. In Citrobacter koseri (strain ATCC BAA-895 / CDC 4225-83 / SGSC4696), this protein is NH(3)-dependent NAD(+) synthetase.